The chain runs to 154 residues: 6,7-dimethyl-8-ribityllumazine synthase (154 aa).

5-amino-6-(D-ribitylamino)uracil is bound by residues Phe-22, 57–59, and 81–83; these read VCE and TVI. Position 86–87 (86–87) interacts with (2S)-2-hydroxy-3-oxobutyl phosphate; it reads KT. Catalysis depends on His-89, which acts as the Proton donor. Residue Val-114 participates in 5-amino-6-(D-ribitylamino)uracil binding. Arg-128 provides a ligand contact to (2S)-2-hydroxy-3-oxobutyl phosphate.

Belongs to the DMRL synthase family. As to quaternary structure, forms an icosahedral capsid composed of 60 subunits, arranged as a dodecamer of pentamers.

It carries out the reaction (2S)-2-hydroxy-3-oxobutyl phosphate + 5-amino-6-(D-ribitylamino)uracil = 6,7-dimethyl-8-(1-D-ribityl)lumazine + phosphate + 2 H2O + H(+). Its pathway is cofactor biosynthesis; riboflavin biosynthesis; riboflavin from 2-hydroxy-3-oxobutyl phosphate and 5-amino-6-(D-ribitylamino)uracil: step 1/2. Its function is as follows. Catalyzes the formation of 6,7-dimethyl-8-ribityllumazine by condensation of 5-amino-6-(D-ribitylamino)uracil with 3,4-dihydroxy-2-butanone 4-phosphate. This is the penultimate step in the biosynthesis of riboflavin. The protein is 6,7-dimethyl-8-ribityllumazine synthase of Wigglesworthia glossinidia brevipalpis.